A 338-amino-acid polypeptide reads, in one-letter code: Palmitoyltransferase ZDHHC15 (338 aa).

The Cytoplasmic segment spans residues Met1–Leu20. A helical membrane pass occupies residues Ser21 to Trp41. Topologically, residues Glu42–Ala56 are lumenal. The chain crosses the membrane as a helical span at residues Tyr57–Phe77. Residues Thr78–Lys172 lie on the Cytoplasmic side of the membrane. The region spanning Arg129 to Ala179 is the DHHC domain. Zn(2+)-binding residues include Cys131, Cys134, His144, Cys145, Cys148, Cys151, and His158. Catalysis depends on Cys159, which acts as the S-palmitoyl cysteine intermediate. Zn(2+) is bound at residue Cys165. A helical transmembrane segment spans residues Phe173–Phe193. Residues Gln194–Lys210 are Lumenal-facing. A helical transmembrane segment spans residues Phe211–His234. Topologically, residues Cys235 to Lys338 are cytoplasmic.

It belongs to the DHHC palmitoyltransferase family. In terms of processing, autopalmitoylated (in vitro).

The protein localises to the golgi apparatus membrane. It is found in the postsynaptic density. The enzyme catalyses L-cysteinyl-[protein] + hexadecanoyl-CoA = S-hexadecanoyl-L-cysteinyl-[protein] + CoA. The catalysed reaction is L-cysteinyl-[protein] + tetradecanoyl-CoA = S-tetradecanoyl-L-cysteinyl-[protein] + CoA. It carries out the reaction L-cysteinyl-[protein] + octadecanoyl-CoA = S-octadecanoyl-L-cysteinyl-[protein] + CoA. Functionally, palmitoyltransferase that catalyzes the addition of palmitate onto various protein substrates. Has no stringent fatty acid selectivity and in addition to palmitate can also transfer onto target proteins myristate from tetradecanoyl-CoA and stearate from octadecanoyl-CoA. May thereby regulate target proteins association and localization to membranes. In the nervous system, probably catalyzes the palmitoylation of synaptic proteins and is involved in the differentiation of dopaminergic neurons and the development of the diencephalon. This chain is Palmitoyltransferase ZDHHC15 (zdhhc15), found in Xenopus laevis (African clawed frog).